The sequence spans 862 residues: Probable inorganic carbon transporter subunit DabA (862 aa).

Zn(2+) is bound by residues cysteine 365, aspartate 367, histidine 540, and cysteine 555.

The protein belongs to the inorganic carbon transporter (TC 9.A.2) DabA family. Forms a complex with DabB. The cofactor is Zn(2+).

Its subcellular location is the cell inner membrane. Part of an energy-coupled inorganic carbon pump. The polypeptide is Probable inorganic carbon transporter subunit DabA (Vibrio cholerae serotype O1 (strain ATCC 39315 / El Tor Inaba N16961)).